An 816-amino-acid chain; its full sequence is Oxysterol-binding protein-related protein 1D (816 aa).

One can recognise a PH domain in the interval 92 to 229 (GAGVAGIMYK…WVEAFQVAKD (138 aa)). Residues 290 to 321 (KHIILLDTLRQLETEKIELEATVVDETKEHDS) are a coiled coil. The disordered stretch occupies residues 340–362 (SASDSEADNESQDGADVESDEDD). Acidic residues predominate over residues 344-362 (SEADNESQDGADVESDEDD). Positions 735-764 (NGEYESANAEKLRLEQLQRQARRLQEKGWK) form a coiled coil.

This sequence belongs to the OSBP family. Expressed in roots, leaves, stems and flowers.

In terms of biological role, may be involved in the transport of sterols. The protein is Oxysterol-binding protein-related protein 1D (ORP1D) of Arabidopsis thaliana (Mouse-ear cress).